Reading from the N-terminus, the 307-residue chain is Serine/threonine-protein phosphatase 4 catalytic subunit B (307 aa).

Aspartate 54, histidine 56, aspartate 82, and asparagine 114 together coordinate Mn(2+). Histidine 115 functions as the Proton donor in the catalytic mechanism. Residues histidine 164 and histidine 238 each contribute to the Mn(2+) site. Residue leucine 307 is modified to Leucine methyl ester.

The protein belongs to the PPP phosphatase family. PP-4 (PP-X) subfamily. As to quaternary structure, serine/threonine-protein phosphatase 4 (PP4) occurs in different assemblies of the catalytic and one or more regulatory subunits. The cofactor is Mn(2+).

The protein resides in the cytoplasm. Its subcellular location is the cytoskeleton. The protein localises to the microtubule organizing center. It is found in the centrosome. The catalysed reaction is O-phospho-L-seryl-[protein] + H2O = L-seryl-[protein] + phosphate. The enzyme catalyses O-phospho-L-threonyl-[protein] + H2O = L-threonyl-[protein] + phosphate. Functionally, protein phosphatase that regulates many processes such as microtubule organization at centrosomes. This Danio rerio (Zebrafish) protein is Serine/threonine-protein phosphatase 4 catalytic subunit B (ppp4cb).